We begin with the raw amino-acid sequence, 134 residues long: Putative nickel-responsive regulator (134 aa).

4 residues coordinate Ni(2+): His-78, His-89, His-91, and Cys-97.

This sequence belongs to the transcriptional regulatory CopG/NikR family. Ni(2+) is required as a cofactor.

Its function is as follows. Transcriptional regulator. This Chlorobaculum parvum (strain DSM 263 / NCIMB 8327) (Chlorobium vibrioforme subsp. thiosulfatophilum) protein is Putative nickel-responsive regulator.